Consider the following 146-residue polypeptide: Benzoylsuccinyl-CoA thiolase subunit BbsA (146 aa).

The Zn(2+) site is built by cysteine 42, cysteine 45, cysteine 55, and cysteine 58.

Belongs to the BbsA family. In terms of assembly, heterotetramer composed of two BbsA subunits and two BbsB subunits. Both BbsA and BbsB are essential for enzymatic activity.

The catalysed reaction is (S)-2-benzoylsuccinyl-CoA + CoA = benzoyl-CoA + succinyl-CoA. It participates in xenobiotic degradation; toluene degradation. Its function is as follows. Component of the BbsAB thiolase complex, which catalyzes the thiolytic cleavage of (S)-2-benzoylsuccinyl-CoA to succinyl-CoA and benzoyl-CoA, the final step of anaerobic toluene metabolism. The BbsA subunit critically contributes to an induced-fit process for productive binding of a CoA substrate into the active site of BbsB. The protein is Benzoylsuccinyl-CoA thiolase subunit BbsA of Geobacter metallireducens (strain ATCC 53774 / DSM 7210 / GS-15).